We begin with the raw amino-acid sequence, 313 residues long: Carbamate kinase (313 aa).

It belongs to the carbamate kinase family.

Its subcellular location is the cytoplasm. It carries out the reaction hydrogencarbonate + NH4(+) + ATP = carbamoyl phosphate + ADP + H2O + H(+). Its pathway is metabolic intermediate metabolism; carbamoyl phosphate degradation; CO(2) and NH(3) from carbamoyl phosphate: step 1/1. The sequence is that of Carbamate kinase (arcC) from Oenococcus oeni (Leuconostoc oenos).